A 209-amino-acid polypeptide reads, in one-letter code: uncharacterized protein (209 aa).

Positions 1–15 (MHRIDTKTAQKDKFG) are enriched in basic and acidic residues. Positions 1–34 (MHRIDTKTAQKDKFGAGKNGFTRGNPQTGTPATD) are disordered. Polar residues predominate over residues 22 to 31 (TRGNPQTGTP).

To E.coli YfdL and M.jannaschii MJ0347.

This is an uncharacterized protein from Escherichia coli (strain K12).